The chain runs to 368 residues: Phospho-N-acetylmuramoyl-pentapeptide-transferase (368 aa).

9 consecutive transmembrane segments (helical) span residues 50 to 70 (LLAL…VVPL), 95 to 115 (PTMG…ILAG), 117 to 137 (SPLV…GWLD), 156 to 176 (LCLQ…QQGW), 183 to 203 (ITLP…LAVF), 218 to 238 (LDGL…LWLA), 242 to 262 (PAIA…LLHN), 284 to 304 (AIAI…LFVL), and 347 to 367 (TQVV…CWLL).

It belongs to the glycosyltransferase 4 family. MraY subfamily. It depends on Mg(2+) as a cofactor.

The protein localises to the cell inner membrane. It catalyses the reaction UDP-N-acetyl-alpha-D-muramoyl-L-alanyl-gamma-D-glutamyl-meso-2,6-diaminopimeloyl-D-alanyl-D-alanine + di-trans,octa-cis-undecaprenyl phosphate = di-trans,octa-cis-undecaprenyl diphospho-N-acetyl-alpha-D-muramoyl-L-alanyl-D-glutamyl-meso-2,6-diaminopimeloyl-D-alanyl-D-alanine + UMP. Its pathway is cell wall biogenesis; peptidoglycan biosynthesis. In terms of biological role, catalyzes the initial step of the lipid cycle reactions in the biosynthesis of the cell wall peptidoglycan: transfers peptidoglycan precursor phospho-MurNAc-pentapeptide from UDP-MurNAc-pentapeptide onto the lipid carrier undecaprenyl phosphate, yielding undecaprenyl-pyrophosphoryl-MurNAc-pentapeptide, known as lipid I. The chain is Phospho-N-acetylmuramoyl-pentapeptide-transferase from Synechococcus sp. (strain ATCC 27144 / PCC 6301 / SAUG 1402/1) (Anacystis nidulans).